The primary structure comprises 483 residues: Chromosomal replication initiator protein DnaA (483 aa).

The interval 1–71 (MKEFWQTCVS…EALAAEWYQR (71 aa)) is domain I, interacts with DnaA modulators. The tract at residues 71–145 (RPVQVQFELP…DAANIVYERS (75 aa)) is domain II. The interval 146–362 (RLNTDLTFEN…GALRKVLAYA (217 aa)) is domain III, AAA+ region. The ATP site is built by Gly190, Gly192, Lys193, and Thr194. The domain IV, binds dsDNA stretch occupies residues 363–483 (RFHGREALNV…LHVLEQTLKG (121 aa)).

Belongs to the DnaA family. Oligomerizes as a right-handed, spiral filament on DNA at oriC.

It localises to the cytoplasm. Its function is as follows. Plays an essential role in the initiation and regulation of chromosomal replication. ATP-DnaA binds to the origin of replication (oriC) to initiate formation of the DNA replication initiation complex once per cell cycle. Binds the DnaA box (a 9 base pair repeat at the origin) and separates the double-stranded (ds)DNA. Forms a right-handed helical filament on oriC DNA; dsDNA binds to the exterior of the filament while single-stranded (ss)DNA is stabiized in the filament's interior. The ATP-DnaA-oriC complex binds and stabilizes one strand of the AT-rich DNA unwinding element (DUE), permitting loading of DNA polymerase. After initiation quickly degrades to an ADP-DnaA complex that is not apt for DNA replication. Binds acidic phospholipids. The sequence is that of Chromosomal replication initiator protein DnaA from Bordetella avium (strain 197N).